The chain runs to 734 residues: Photosystem I P700 chlorophyll a apoprotein A2 (734 aa).

Transmembrane regions (helical) follow at residues 46-69 (IFAS…FHVA), 135-158 (LYTG…LHLQ), 175-199 (LNHH…HVAI), 273-291 (IAHH…GHMY), 330-353 (VHFQ…QHMY), 369-395 (AALY…IFFI), 417-439 (AIIS…LYVH), and 517-535 (FLVH…LILV). Positions 559 and 568 each coordinate [4Fe-4S] cluster. The next 2 helical transmembrane spans lie at 575 to 596 (AFYL…YWHW) and 643 to 665 (LSVW…MFLI). Chlorophyll a is bound by residues H654, M662, and Y670. Residue W671 participates in phylloquinone binding. Residues 707–727 (LVGLAHFSVGYIFTYAAFLIA) traverse the membrane as a helical segment.

The protein belongs to the PsaA/PsaB family. In terms of assembly, the PsaA/B heterodimer binds the P700 chlorophyll special pair and subsequent electron acceptors. PSI consists of a core antenna complex that captures photons, and an electron transfer chain that converts photonic excitation into a charge separation. The eukaryotic PSI reaction center is composed of at least 11 subunits. P700 is a chlorophyll a/chlorophyll a' dimer, A0 is one or more chlorophyll a, A1 is one or both phylloquinones and FX is a shared 4Fe-4S iron-sulfur center. serves as cofactor.

The protein localises to the plastid. The protein resides in the chloroplast thylakoid membrane. It catalyses the reaction reduced [plastocyanin] + hnu + oxidized [2Fe-2S]-[ferredoxin] = oxidized [plastocyanin] + reduced [2Fe-2S]-[ferredoxin]. Its function is as follows. PsaA and PsaB bind P700, the primary electron donor of photosystem I (PSI), as well as the electron acceptors A0, A1 and FX. PSI is a plastocyanin-ferredoxin oxidoreductase, converting photonic excitation into a charge separation, which transfers an electron from the donor P700 chlorophyll pair to the spectroscopically characterized acceptors A0, A1, FX, FA and FB in turn. Oxidized P700 is reduced on the lumenal side of the thylakoid membrane by plastocyanin. In Platanus occidentalis (Sycamore), this protein is Photosystem I P700 chlorophyll a apoprotein A2.